The sequence spans 482 residues: tRNA-2-methylthio-N(6)-dimethylallyladenosine synthase (482 aa).

Residues 3–120 (KKLHIKTWGC…LPEMIKQVQG (118 aa)) enclose the MTTase N-terminal domain. [4Fe-4S] cluster-binding residues include C12, C49, C83, C158, C162, and C165. Positions 144–376 (KADGPSAFVS…QNRITQMAQQ (233 aa)) constitute a Radical SAM core domain. The TRAM domain occupies 379 to 442 (RQMFDTEQRI…PNSLRGDLIR (64 aa)).

The protein belongs to the methylthiotransferase family. MiaB subfamily. In terms of assembly, monomer. Requires [4Fe-4S] cluster as cofactor.

It localises to the cytoplasm. The enzyme catalyses N(6)-dimethylallyladenosine(37) in tRNA + (sulfur carrier)-SH + AH2 + 2 S-adenosyl-L-methionine = 2-methylsulfanyl-N(6)-dimethylallyladenosine(37) in tRNA + (sulfur carrier)-H + 5'-deoxyadenosine + L-methionine + A + S-adenosyl-L-homocysteine + 2 H(+). Catalyzes the methylthiolation of N6-(dimethylallyl)adenosine (i(6)A), leading to the formation of 2-methylthio-N6-(dimethylallyl)adenosine (ms(2)i(6)A) at position 37 in tRNAs that read codons beginning with uridine. The chain is tRNA-2-methylthio-N(6)-dimethylallyladenosine synthase from Pseudoalteromonas translucida (strain TAC 125).